Consider the following 236-residue polypeptide: Phosphoribosylaminoimidazole-succinocarboxamide synthase (236 aa).

This sequence belongs to the SAICAR synthetase family.

The catalysed reaction is 5-amino-1-(5-phospho-D-ribosyl)imidazole-4-carboxylate + L-aspartate + ATP = (2S)-2-[5-amino-1-(5-phospho-beta-D-ribosyl)imidazole-4-carboxamido]succinate + ADP + phosphate + 2 H(+). The protein operates within purine metabolism; IMP biosynthesis via de novo pathway; 5-amino-1-(5-phospho-D-ribosyl)imidazole-4-carboxamide from 5-amino-1-(5-phospho-D-ribosyl)imidazole-4-carboxylate: step 1/2. This chain is Phosphoribosylaminoimidazole-succinocarboxamide synthase, found in Lysinibacillus sphaericus (strain C3-41).